The chain runs to 814 residues: Lon protease (814 aa).

The interval 1–20 (MANEAHNIEHTDPEFRDDSA) is disordered. Positions 25-219 (LPLLPVRDTV…KINQHLAKEL (195 aa)) constitute a Lon N-terminal domain. ATP is bound at residue 372-379 (GPPGVGKT). The Lon proteolytic domain maps to 610-792 (TKRAGVVVGL…DEVLEIALPS (183 aa)). Catalysis depends on residues S697 and K740.

It belongs to the peptidase S16 family. As to quaternary structure, homohexamer. Organized in a ring with a central cavity.

It localises to the cytoplasm. It carries out the reaction Hydrolysis of proteins in presence of ATP.. Functionally, ATP-dependent serine protease that mediates the selective degradation of mutant and abnormal proteins as well as certain short-lived regulatory proteins. Required for cellular homeostasis and for survival from DNA damage and developmental changes induced by stress. Degrades polypeptides processively to yield small peptide fragments that are 5 to 10 amino acids long. Binds to DNA in a double-stranded, site-specific manner. The sequence is that of Lon protease from Koribacter versatilis (strain Ellin345).